Consider the following 646-residue polypeptide: uncharacterized protein (646 aa).

Helical transmembrane passes span 20-40 (AYFL…SFIF), 54-74 (LVKT…IFFI), 115-135 (LAAI…FFMI), 154-174 (AFVM…ILSL), 203-223 (TVLS…ANAI), 232-252 (ILIL…VAFF), 285-305 (LFLT…IYMF), 523-543 (GVAL…IVQG), 582-602 (IGFL…FAYA), and 613-633 (FLEA…YYIV).

It belongs to the ABC-4 integral membrane protein family.

The protein localises to the cell membrane. This is an uncharacterized protein from Bacillus subtilis (strain 168).